The primary structure comprises 496 residues: MLO-like protein 15 (496 aa).

Over 1-9 the chain is Extracellular; it reads MAGGGTTLE. Residues 10–30 traverse the membrane as a helical segment; sequence YTPTWVVALVCSVIVSISFAV. Topologically, residues 31–59 are cytoplasmic; the sequence is ERLIHRAGKHFKNNDQKQLFGALQKIKEE. The chain crosses the membrane as a helical span at residues 60-80; sequence LMLVGFISLLLSVGQSKIAKI. The Extracellular segment spans residues 81–147; it reads CISKELSEKF…MSLSALHELH (67 aa). The helical transmembrane segment at 148–168 threads the bilayer; it reads IFIFVLAVAHIIFCLLTIVFG. At 169–269 the chain is on the cytoplasmic side; the sequence is TMKIKQWKKW…KYLMRALNSD (101 aa). The helical transmembrane segment at 270 to 290 threads the bilayer; the sequence is FKKVVGISWYLWVFVVLFLLL. Residue asparagine 291 is a topological domain, extracellular. Residues 292–312 traverse the membrane as a helical segment; it reads IVAWHVYFWLAFIPLILLLAV. Residues 313-355 are Cytoplasmic-facing; the sequence is GTKLEHIITDLAHEVAEKHIAVEGDLVVRPSDDLFWFQSPRLV. Residues 356-376 traverse the membrane as a helical segment; that stretch reads LFLIHFILFQNSFEIAYFFFI. Topologically, residues 377 to 397 are extracellular; it reads LFQFGWDSCIMDHVKFVIPRL. A helical membrane pass occupies residues 398 to 418; it reads VIGVIIQLLCSYSTLPLYALV. At 419–496 the chain is on the cytoplasmic side; the sequence is TQMGSSFKGA…KEKSEIAHHD (78 aa). A calmodulin-binding region spans residues 432-453; sequence EQTQEHLVGWAKMAKRGVKKGA. The segment at 454–496 is disordered; the sequence is TQVGTSHDATSPRPSIQLNSLLGKGSSQQNQNPKEKSEIAHHD. Over residues 455 to 485 the composition is skewed to polar residues; that stretch reads QVGTSHDATSPRPSIQLNSLLGKGSSQQNQN. Basic and acidic residues predominate over residues 486–496; that stretch reads PKEKSEIAHHD.

The protein belongs to the MLO family.

The protein resides in the membrane. In terms of biological role, may be involved in modulation of pathogen defense and leaf cell death. Activity seems to be regulated by Ca(2+)-dependent calmodulin binding and seems not to require heterotrimeric G proteins. This chain is MLO-like protein 15 (MLO15), found in Arabidopsis thaliana (Mouse-ear cress).